Here is a 456-residue protein sequence, read N- to C-terminus: RuvB-like 1 (456 aa).

The tract at residues 1–20 (MKIEEVKSTTKTQRIASHSH) is disordered. 70–77 (GPPGTGKT) is a binding site for ATP.

The protein belongs to the RuvB family. In terms of assembly, forms homohexameric rings. Can form a dodecamer with ruvbl2 made of two stacked hexameric rings. Is a component of the RNA polymerase II holoenzyme complex. Component of the chromatin-remodeling Ino80 complex. Component of some MLL1/MLL complex.

It localises to the nucleus. The protein localises to the dynein axonemal particle. It carries out the reaction ATP + H2O = ADP + phosphate + H(+). Has single-stranded DNA-stimulated ATPase and ATP-dependent DNA helicase (3' to 5') activity suggesting a role in nuclear processes such as recombination and transcription. Proposed core component of the chromatin remodeling Ino80 complex which exhibits DNA- and nucleosome-activated ATPase activity and catalyzes ATP-dependent nucleosome sliding. May act as a negative regulator of embryonic heart growth. The protein is RuvB-like 1 (ruvbl1) of Danio rerio (Zebrafish).